The primary structure comprises 438 residues: Transposon Ty2-LR2 Gag polyprotein (438 aa).

3 stretches are compositionally biased toward polar residues: residues 1–11 (MESQQLHQNPH), 19–39 (ASVT…SASN), and 49–60 (KVNSQEETTPGT). Disordered regions lie at residues 1-88 (MESQ…YQQH), 364-397 (KNVS…AKAH), and 418-438 (VSSQ…TERI). Positions 295–397 (ENNINVSDRL…SSKPRAAKAH (103 aa)) are RNA-binding. Over residues 369-381 (TSPNTTNTKVTTR) the composition is skewed to low complexity.

As to quaternary structure, homotrimer.

The protein resides in the cytoplasm. In terms of biological role, capsid protein (CA) is the structural component of the virus-like particle (VLP), forming the shell that encapsulates the retrotransposons dimeric RNA genome. The particles are assembled from trimer-clustered units and there are holes in the capsid shells that allow for the diffusion of macromolecules. CA also has nucleocapsid-like chaperone activity, promoting primer tRNA(i)-Met annealing to the multipartite primer-binding site (PBS), dimerization of Ty2 RNA and initiation of reverse transcription. This is Transposon Ty2-LR2 Gag polyprotein (TY2A-LR2) from Saccharomyces cerevisiae (strain ATCC 204508 / S288c) (Baker's yeast).